Consider the following 685-residue polypeptide: Polyphosphate kinase (685 aa).

ATP is bound at residue Asn-45. Arg-375 and Arg-405 together coordinate Mg(2+). His-435 acts as the Phosphohistidine intermediate in catalysis. 3 residues coordinate ATP: Tyr-468, Arg-564, and His-592.

The protein belongs to the polyphosphate kinase 1 (PPK1) family. The cofactor is Mg(2+). An intermediate of this reaction is the autophosphorylated ppk in which a phosphate is covalently linked to a histidine residue through a N-P bond.

It carries out the reaction [phosphate](n) + ATP = [phosphate](n+1) + ADP. In terms of biological role, catalyzes the reversible transfer of the terminal phosphate of ATP to form a long-chain polyphosphate (polyP). The protein is Polyphosphate kinase of Neisseria meningitidis serogroup A / serotype 4A (strain DSM 15465 / Z2491).